Here is a 184-residue protein sequence, read N- to C-terminus: Large ribosomal subunit protein uL22 (184 aa).

Belongs to the universal ribosomal protein uL22 family.

This chain is Large ribosomal subunit protein uL22 (RPL17), found in Yarrowia lipolytica (strain CLIB 122 / E 150) (Yeast).